A 500-amino-acid chain; its full sequence is L-arabinose isomerase (500 aa).

Mn(2+) contacts are provided by glutamate 306, glutamate 333, histidine 350, and histidine 450.

This sequence belongs to the arabinose isomerase family. As to quaternary structure, homohexamer. It depends on Mn(2+) as a cofactor.

The enzyme catalyses beta-L-arabinopyranose = L-ribulose. The protein operates within carbohydrate degradation; L-arabinose degradation via L-ribulose; D-xylulose 5-phosphate from L-arabinose (bacterial route): step 1/3. Catalyzes the conversion of L-arabinose to L-ribulose. The chain is L-arabinose isomerase from Shigella flexneri serotype 5b (strain 8401).